The primary structure comprises 289 residues: uncharacterized protein (289 aa).

Residues 268–289 form a disordered region; that stretch reads SDDGYETQWSDGPYSIPSGLSD.

This is an uncharacterized protein from Zea mays (Maize).